We begin with the raw amino-acid sequence, 72 residues long: Translation initiation factor IF-1 (72 aa).

The 72-residue stretch at 1-72 folds into the S1-like domain; the sequence is MAKDDVIEVD…DKGRITFRYK (72 aa).

Belongs to the IF-1 family. Component of the 30S ribosomal translation pre-initiation complex which assembles on the 30S ribosome in the order IF-2 and IF-3, IF-1 and N-formylmethionyl-tRNA(fMet); mRNA recruitment can occur at any time during PIC assembly.

The protein resides in the cytoplasm. One of the essential components for the initiation of protein synthesis. Stabilizes the binding of IF-2 and IF-3 on the 30S subunit to which N-formylmethionyl-tRNA(fMet) subsequently binds. Helps modulate mRNA selection, yielding the 30S pre-initiation complex (PIC). Upon addition of the 50S ribosomal subunit IF-1, IF-2 and IF-3 are released leaving the mature 70S translation initiation complex. This is Translation initiation factor IF-1 from Wolinella succinogenes (strain ATCC 29543 / DSM 1740 / CCUG 13145 / JCM 31913 / LMG 7466 / NCTC 11488 / FDC 602W) (Vibrio succinogenes).